A 218-amino-acid chain; its full sequence is Small ribosomal subunit protein uS3 (218 aa).

A KH type-2 domain is found at 38–106; sequence IREYLTKRLS…RVHINIVEIK (69 aa).

This sequence belongs to the universal ribosomal protein uS3 family. As to quaternary structure, part of the 30S ribosomal subunit. Forms a tight complex with proteins S10 and S14.

Functionally, binds the lower part of the 30S subunit head. Binds mRNA in the 70S ribosome, positioning it for translation. The sequence is that of Small ribosomal subunit protein uS3 from Anoxybacillus flavithermus (strain DSM 21510 / WK1).